The following is a 514-amino-acid chain: Prolyl 3,4-dihydroxylase OGFOD1 (514 aa).

The Fe2OG dioxygenase domain occupies 114–221 (GAVDCSCNIY…RVSISGWFHT (108 aa)). Positions 132 and 134 each coordinate Fe cation. Position 146 (Tyr146) interacts with 2-oxoglutarate. His200 contributes to the Fe cation binding site. Arg212 serves as a coordination point for 2-oxoglutarate.

Belongs to the TPA1 family. In terms of assembly, monomer and homodimer. The cofactor is Fe(2+). Requires L-ascorbate as cofactor.

It carries out the reaction [ribosomal protein uS12]-L-proline + 2-oxoglutarate + O2 = [ribosomal protein uS12]-(3S)-3-hydroxy-L-proline + succinate + CO2. The catalysed reaction is [ribosomal protein uS12]-(3S)-3-hydroxy-L-proline + 2-oxoglutarate + O2 = [ribosomal protein uS12]-(3S)-3,4-dihydroxy-L-proline + succinate + CO2. Its function is as follows. Prolyl 3,4-dihydroxylase that catalyzes 3,4-dihydroxylation of 'Pro-61' of small ribosomal subunit uS12 (RPS23), thereby regulating protein translation termination efficiency. The chain is Prolyl 3,4-dihydroxylase OGFOD1 (Ogd) from Ostreococcus tauri.